Reading from the N-terminus, the 246-residue chain is U2 small nuclear ribonucleoprotein A' (246 aa).

LRR repeat units lie at residues 19 to 40, 42 to 63, 64 to 85, and 88 to 109; these read RDRE…GVTR, QNDA…PLLQ, QLKT…IGHS, and ALHS…VHLS. The LRRCT domain maps to 122-160; that stretch reads TPASREAQYREFVIWKLPQVRVLDYQRIKDKERARAKDL.

The protein belongs to the U2 small nuclear ribonucleoprotein A family. In terms of assembly, associated with the spliceosome.

Its subcellular location is the nucleus. In terms of biological role, involved in pre-mRNA splicing. This is U2 small nuclear ribonucleoprotein A' (LEA1) from Mycosarcoma maydis (Corn smut fungus).